The sequence spans 161 residues: Hydrogenase expression/formation protein HoxO (161 aa).

This sequence belongs to the HupG/HyaE family.

This is Hydrogenase expression/formation protein HoxO (hoxO) from Cupriavidus necator (strain ATCC 17699 / DSM 428 / KCTC 22496 / NCIMB 10442 / H16 / Stanier 337) (Ralstonia eutropha).